The sequence spans 465 residues: Phosphatidylserine synthase 1 (465 aa).

Residues 1 to 35 (MATTFRSQTLSKDDVNYRMHFRMINEQQVEDITIQ) lie on the Cytoplasmic side of the membrane. A helical transmembrane segment spans residues 36 to 56 (FFYKPHTISLLTVTVLSLMYF). The Lumenal portion of the chain corresponds to 57–70 (AFTRDDGDPDSNLR). Residues 71–91 (VGLILLVSFFLVISVLAFPNG) traverse the membrane as a helical segment. The Cytoplasmic segment spans residues 92–102 (PFTRPHPAIWR). The chain crosses the membrane as a helical span at residues 103 to 123 (IVFGLSVLYFLFLVFIIFLNW). Residues 124 to 286 (DQVKALMFWL…WLDPKSSLQR (163 aa)) lie on the Lumenal side of the membrane. Residues 287-307 (VMGVYLFMIIWQLTELNTFFL) form a helical membrane-spanning segment. The Cytoplasmic portion of the chain corresponds to 308-309 (KH). The chain crosses the membrane as a helical span at residues 310–330 (IFVFPACHALSWCRILFIGII). Residues 331 to 355 (TAPTVRQYYAYLTDTQCKRVGTQCW) lie on the Lumenal side of the membrane. A helical membrane pass occupies residues 356–376 (VFGAIAFLEALACIKFGQDLF). Residues 377 to 380 (SKTQ) are Cytoplasmic-facing. A helical transmembrane segment spans residues 381–401 (ILYVILWLVCLAFITFLCLYV). The Lumenal portion of the chain corresponds to 402–465 (MVWYAENYGP…DSRTINGMEK (64 aa)). The tract at residues 446–465 (CSTRKRRDSGDSRTINGMEK) is disordered.

The protein belongs to the phosphatidyl serine synthase family.

Its subcellular location is the endoplasmic reticulum membrane. It carries out the reaction a 1,2-diacyl-sn-glycero-3-phosphoethanolamine + L-serine = a 1,2-diacyl-sn-glycero-3-phospho-L-serine + ethanolamine. The catalysed reaction is a 1,2-diacyl-sn-glycero-3-phosphocholine + L-serine = a 1,2-diacyl-sn-glycero-3-phospho-L-serine + choline. Its pathway is phospholipid metabolism; phosphatidylserine biosynthesis. In terms of biological role, catalyzes a base-exchange reaction in which the polar head group of phosphatidylethanolamine (PE) or phosphatidylcholine (PC) is replaced by L-serine. Catalyzes mainly the conversion of phosphatidylcholine but also converts, in vitro and to a lesser extent, phosphatidylethanolamine. The protein is Phosphatidylserine synthase 1 (ptdss1) of Danio rerio (Zebrafish).